Reading from the N-terminus, the 541-residue chain is 2-isopropylmalate synthase (541 aa).

In terms of domain architecture, Pyruvate carboxyltransferase spans 8 to 284 (VIIFDTTLRD…LTNINTRHIY (277 aa)). Residues aspartate 17, histidine 208, histidine 210, and asparagine 244 each contribute to the Mn(2+) site. The tract at residues 408–541 (RLELVQVSCG…DQPTEVVAGS (134 aa)) is regulatory domain.

It belongs to the alpha-IPM synthase/homocitrate synthase family. LeuA type 1 subfamily. In terms of assembly, homodimer. It depends on Mn(2+) as a cofactor.

It is found in the cytoplasm. It carries out the reaction 3-methyl-2-oxobutanoate + acetyl-CoA + H2O = (2S)-2-isopropylmalate + CoA + H(+). The protein operates within amino-acid biosynthesis; L-leucine biosynthesis; L-leucine from 3-methyl-2-oxobutanoate: step 1/4. Its function is as follows. Catalyzes the condensation of the acetyl group of acetyl-CoA with 3-methyl-2-oxobutanoate (2-ketoisovalerate) to form 3-carboxy-3-hydroxy-4-methylpentanoate (2-isopropylmalate). This is 2-isopropylmalate synthase from Trichodesmium erythraeum (strain IMS101).